The primary structure comprises 329 residues: L-carnitine dehydrogenase (329 aa).

19 to 24 lines the NAD(+) pocket; that stretch reads GAGVIG.

The protein belongs to the 3-hydroxyacyl-CoA dehydrogenase family. L-carnitine dehydrogenase subfamily. As to quaternary structure, homodimer.

The protein localises to the cytoplasm. It carries out the reaction carnitine + NAD(+) = 3-dehydrocarnitine + NADH + H(+). It participates in amine and polyamine metabolism; carnitine metabolism. Catalyzes the NAD(+)-dependent oxidation of L-carnitine to 3-dehydrocarnitine. The polypeptide is L-carnitine dehydrogenase (Nocardiopsis dassonvillei (strain ATCC 23218 / DSM 43111 / CIP 107115 / JCM 7437 / KCTC 9190 / NBRC 14626 / NCTC 10488 / NRRL B-5397 / IMRU 509) (Actinomadura dassonvillei)).